The sequence spans 304 residues: D-alanine--D-alanine ligase (304 aa).

In terms of domain architecture, ATP-grasp spans 103-299 (KLIWQALGLP…FADLCIEILK (197 aa)). 129–184 (EEKLGLPMFVKPAAEGSSVGVVKVKGKGRLKSVYEELKHFQGEIIAERFIGGGEYS) contacts ATP. Residues D253, E266, and N268 each coordinate Mg(2+).

It belongs to the D-alanine--D-alanine ligase family. The cofactor is Mg(2+). Mn(2+) serves as cofactor.

Its subcellular location is the cytoplasm. The enzyme catalyses 2 D-alanine + ATP = D-alanyl-D-alanine + ADP + phosphate + H(+). It participates in cell wall biogenesis; peptidoglycan biosynthesis. In terms of biological role, cell wall formation. This is D-alanine--D-alanine ligase from Neisseria meningitidis serogroup A / serotype 4A (strain DSM 15465 / Z2491).